The chain runs to 396 residues: Metallophosphoesterase 1 (396 aa).

The helical transmembrane segment at 28–48 (TVVIISVLLFCEYFIYYLVLF) threads the bilayer. A divalent metal cation-binding residues include Asp75, Asp117, Asn155, His249, His303, and His305. The chain crosses the membrane as a helical span at residues 356–376 (TVLTMYGAAAGFLMILILVHF).

Belongs to the metallophosphoesterase superfamily. MPPE1 family. In terms of assembly, interacts with GPI-anchor proteins (via the GPI portion). Interacts with TMED10. The cofactor is Mn(2+).

It is found in the endoplasmic reticulum-Golgi intermediate compartment membrane. Its function is as follows. Metallophosphoesterase that catalyzes the removal of a side-chain ethanolamine-phosphate (EtNP) from the second mannose of the GPI-anchor protein intermediate. Participates in the glycan remodeling steps of GPI-anchor maturation to allow an efficient transport of GPI-anchor proteins from the endoplasmic reticulum to the Golgi. This Mus musculus (Mouse) protein is Metallophosphoesterase 1.